The following is a 596-amino-acid chain: MKHIRNFSIIAHIDHGKSTLSDRLIQECGGLSDREMAAQVLDSMDLERERGITIKAQSVTLDYKAKDGETYQLNFIDTPGHVDFSYEVSRSLAACEGALLVVDAGQGVEAQTLANCYTALDMDLDVVPVLNKIDLPQADPERVAEEIEDIVGIEAADAVRCSAKTGLGISDVLETIVAQIPPPEGDPEAPLQALIIDSWFDSYLGVVSLVRIKHGVLKKGDKFKVMSTGQTHTADRVGIFTPKQTDTAQLSTGEVGFVIAGIKEIHGAPVGDTLTLAKNGADKPLPGFKKVKPQVYAGVFPISTDDYENFRDALNKLSLNDASLFFEPETSSALGFGFRIGYLGLLHMEIIQERLEREYNLDLITTAPTVVYEVVTTKGETIYVDNPSDLPPMNNIEEMREPIVETNILVPKEYLGNVITLCIEKRGVQTNMVYHGNQVAITYDMPMAEVVMDFFDRLKSTSRGYASLEYNFKRFEAADMVRLDVLINGDRVDALAMILHKANVRYQGLALVNKMKELIPRQMFDIAIQAAVGSQIIARSSVKALRKDVTAKCYGGDVSRKKKLLQKQKEGKKRMKQVGNVEVPQEAFLAVLKINE.

One can recognise a tr-type G domain in the interval 2-184; it reads KHIRNFSIIA…TIVAQIPPPE (183 aa). GTP-binding positions include 14 to 19 and 131 to 134; these read DHGKST and NKID.

This sequence belongs to the TRAFAC class translation factor GTPase superfamily. Classic translation factor GTPase family. LepA subfamily.

It is found in the cell inner membrane. The enzyme catalyses GTP + H2O = GDP + phosphate + H(+). Required for accurate and efficient protein synthesis under certain stress conditions. May act as a fidelity factor of the translation reaction, by catalyzing a one-codon backward translocation of tRNAs on improperly translocated ribosomes. Back-translocation proceeds from a post-translocation (POST) complex to a pre-translocation (PRE) complex, thus giving elongation factor G a second chance to translocate the tRNAs correctly. Binds to ribosomes in a GTP-dependent manner. This is Elongation factor 4 from Shewanella loihica (strain ATCC BAA-1088 / PV-4).